Here is a 547-residue protein sequence, read N- to C-terminus: Elongator complex protein 3 (547 aa).

A Radical SAM core domain is found at 82-372 (RTASGIAVVA…YRVQRDIPMP (291 aa)). The [4Fe-4S] cluster site is built by C99, C109, and C112. S161 is modified (phosphoserine). Position 164 (K164) interacts with acetyl-CoA. Y202 is modified (phosphotyrosine; by ALK). K229 is modified (N6-methyllysine). The residue at position 251 (Y251) is a Phosphotyrosine. An N-acetyltransferase domain is found at 396–547 (IQCRDVRTRE…QGPYMVKMLK (152 aa)). Residues 474 to 477 (ELHV), 497 to 499 (FGM), and Y530 each bind acetyl-CoA.

It belongs to the ELP3 family. In terms of assembly, component of the elongator complex which consists of ELP1, ELP2, ELP3, ELP4, ELP5 and ELP6. ELP1, ELP2 and ELP3 form the elongator core complex. Interacts with alpha-tubulin. [4Fe-4S] cluster is required as a cofactor. In terms of processing, tyrosine-phosphorylated; phosphorylation on Tyr-202 does not affect elongator complex integrity or ELP3 protein stability. Also serine/threonine-phosphorylated. Expressed in the cerebellum and spinal motor neurons.

It localises to the cytoplasm. The protein localises to the nucleus. It catalyses the reaction uridine(34) in tRNA + acetyl-CoA + S-adenosyl-L-methionine + H2O = 5-(carboxymethyl)uridine(34) in tRNA + 5'-deoxyadenosine + L-methionine + CoA + 2 H(+). It functions in the pathway tRNA modification; 5-methoxycarbonylmethyl-2-thiouridine-tRNA biosynthesis. In terms of biological role, catalytic tRNA acetyltransferase subunit of the elongator complex which is required for multiple tRNA modifications, including mcm5U (5-methoxycarbonylmethyl uridine), mcm5s2U (5-methoxycarbonylmethyl-2-thiouridine), and ncm5U (5-carbamoylmethyl uridine). In the elongator complex, acts as a tRNA uridine(34) acetyltransferase by mediating formation of carboxymethyluridine in the wobble base at position 34 in tRNAs. May also act as a protein lysine acetyltransferase by mediating acetylation of target proteins; such activity is however unclear in vivo and recent evidences suggest that ELP3 primarily acts as a tRNA acetyltransferase. Involved in neurogenesis: regulates the migration and branching of projection neurons in the developing cerebral cortex, through a process depending on alpha-tubulin acetylation. Required for acetylation of GJA1 in the developing cerebral cortex. In Homo sapiens (Human), this protein is Elongator complex protein 3.